Consider the following 82-residue polypeptide: Putative ribonuclease VapC34 (82 aa).

Residue Asp-4 coordinates Mg(2+).

This sequence belongs to the PINc/VapC protein family. Mg(2+) is required as a cofactor.

Toxic component of a possible type II toxin-antitoxin (TA) system. A putative RNase. Its cognate antitoxin is VapB34. The polypeptide is Putative ribonuclease VapC34 (vapC34) (Mycobacterium tuberculosis (strain CDC 1551 / Oshkosh)).